A 668-amino-acid polypeptide reads, in one-letter code: MSDSGVFAFELGDDLATRCGNTLTGVFVPGSRIALSAYRHVTHSSRDEPTENAGQVPVLIYMAQESTLFDEPVLRSVLAEANATFATLQQLGSRATRAEYVNISRAYRSIVRSCLEKLEQAKKSPEVQTDEARLQRLCDAIVVFYAAECLWHLFEILYIQSNQLVVPQLLDWARFHSPHAEDRATDLLLMGEEASESDDYWSIVKSLIMLGEIDVTRAVLSQNRKAGQTSFKAAEQILKSMPVYQEGYALQKFHSQWEFWHVDTERKIQSGLFATEPELEQLIRLVAGDSEQWDAGIKESQDFYEYLPGYLLFTKPTCKPFELKIAAAKWLNRWCLLRPEREQCSMNRMVSQLMDHDLRLFIYDAQKLNDTHWFSTHLIDLIHHCGQLKSYFDQNNIDLPALRHSMIYEYGSYLMTSHNMWQLGIDYLDCCKQEGQAAIELLLPRITLRSERQATKLINLARQRGLISVEREICKVLSKRSYDNERYGNALEWAIRSKDVLLVTAVADFILKHYSKTGCMLCPDTIANVGGRMFASPRLVFLSKYFEFYEFYRTRDFLSASELLVNLLESKITPDYFWPSLLIDSMPLLESKDPKIFAKETVAILHHIETDLVPIIERDVSKYGKHHTETVFKDYRVENVDEIMNLLRLACARNLARALIIENTLPVV.

It belongs to the nucleoporin Nup85 family. In terms of assembly, component of the nuclear pore complex (NPC). Component of the NPC Nup107-160 subcomplex.

The protein localises to the nucleus. It localises to the nuclear pore complex. The protein resides in the nucleus membrane. In terms of biological role, component of the nuclear pore complex (NPC) that seems to be required for NPC assembly and maintenance. Required for nuclear import of phosphorylated Mad via importin msk. Has no role in classical nuclear localization signal (cNLS)-dependent nuclear import via importin-beta. Facilitates the interaction between Nup93 and sec13 with msk. The sequence is that of Nuclear pore complex protein Nup75 from Drosophila melanogaster (Fruit fly).